Here is a 1247-residue protein sequence, read N- to C-terminus: Structural polyprotein (1247 aa).

The disordered stretch occupies residues 52–103; sequence ALRTVPQKPRRTRKTKKQKQVKQEQQSTRNQKKKAPKQKQTQKKKRPGRRER. Basic residues-rich tracts occupy residues 59–71 and 81–100; these read KPRRTRKTKKQKQ and NQKKKAPKQKQTQKKKRPGR. A ribosome-binding region spans residues 86 to 99; it reads APKQKQTQKKKRPG. Cysteine 112 and cysteine 127 form a disulfide bridge. Positions 112–260 constitute a Peptidase S3 domain; sequence CIFEVKHEGK…KITPEGSVEW (149 aa). Catalysis depends on histidine 138, which acts as the Charge relay system. An interaction with spike glycoprotein E2 region spans residues 154–159; it reads KRSSKY. Residues aspartate 160 and serine 212 each act as charge relay system in the active site. The interval 261–273 is functions as an uncleaved signal peptide for the precursor of protein E3/E2; that stretch reads SLALPVMCLLANT. 9 disulfides stabilise this stretch: cysteine 268–cysteine 277, cysteine 282–cysteine 286, cysteine 285–cysteine 317, cysteine 343–cysteine 449, cysteine 346–cysteine 352, cysteine 415–cysteine 429, cysteine 477–cysteine 590, cysteine 525–cysteine 549, and cysteine 527–cysteine 544. Residue asparagine 272 is glycosylated (N-linked (GlcNAc...) asparagine; by host). Residues 325–691 lie on the Extracellular side of the membrane; sequence NARENFNVYK…YYYELYPTTT (367 aa). A glycan (N-linked (GlcNAc...) asparagine; by host) is linked at asparagine 587. The helical transmembrane segment at 692 to 712 threads the bilayer; the sequence is IAVLAAASIVVASLVSLSLGM. Residues 713 to 747 lie on the Cytoplasmic side of the membrane; the sequence is CICARRRCITPYELTPGATIPFLLGVLCCVKTAKA. Residues 715-719 are interaction with the capsid protein; the sequence is CARRR. S-palmitoyl cysteine; by host attachment occurs at residues cysteine 720, cysteine 740, and cysteine 741. The transient transmembrane before p62-6K protein processing stretch occupies residues 720–740; the sequence is CITPYELTPGATIPFLLGVLC. An intrachain disulfide couples cysteine 720 to cysteine 741. The Extracellular portion of the chain corresponds to 748 to 762; that stretch reads ASYYEAATYLWNEQQ. The chain crosses the membrane as a helical span at residues 763 to 783; sequence PLFWLQLLIPLSAAIVACNCL. Topologically, residues 784–787 are cytoplasmic; sequence KLLP. The helical transmembrane segment at 788–808 threads the bilayer; the sequence is CCCKTLTFLAVMSIGARTVSA. At 809–1223 the chain is on the extracellular side; sequence YEHATVIPNT…AMSWVQKITG (415 aa). Cystine bridges form between cysteine 857/cysteine 922, cysteine 870/cysteine 902, cysteine 871/cysteine 904, and cysteine 876/cysteine 886. The tract at residues 892 to 909 is E1 fusion peptide loop; sequence VYPFMWGGAYCFCDAENT. N-linked (GlcNAc...) asparagine; by host glycosylation is found at asparagine 949 and asparagine 1078. Intrachain disulfides connect cysteine 1067–cysteine 1079, cysteine 1109–cysteine 1184, cysteine 1114–cysteine 1188, and cysteine 1136–cysteine 1178. A helical membrane pass occupies residues 1224 to 1244; sequence GVGLVVAIAALILIIVLCVSF. Cysteine 1241 carries the S-palmitoyl cysteine; by host lipid modification. Over 1245-1247 the chain is Cytoplasmic; sequence SRH.

In terms of assembly, homodimer. Homomultimer. Interacts with host karyopherin KPNA4; this interaction allows the nuclear import of the viral capsid protein. Interacts with spike glycoprotein E2. Interacts with host IRAK1; the interaction leads to inhibition of IRAK1-dependent signaling. The precursor of protein E3/E2 and E1 form a heterodimer shortly after synthesis. As to quaternary structure, the precursor of protein E3/E2 and E1 form a heterodimer shortly after synthesis. Processing of the precursor of protein E3/E2 into E2 and E3 results in a heterodimer of the spike glycoproteins E2 and E1. Spike at virion surface are constituted of three E2-E1 heterodimers. After target cell attachment and endocytosis, E1 change conformation to form homotrimers. Interacts with 6K protein. In terms of assembly, interacts with spike glycoprotein E1. Processing of the precursor of protein E3/E2 into E2 and E3 results in a heterodimer of the spike glycoproteins E2 and E1. Spike at virion surface are constituted of a trimer of E2-E1 heterodimers. Interacts with 6K protein. Interacts with host MXRA8; this interaction mediates virus entry. Oligomer. Interacts with spike glycoprotein E1. Interacts with spike glycoprotein E2. In terms of processing, structural polyprotein: Specific enzymatic cleavages in vivo yield mature proteins. Capsid protein is auto-cleaved during polyprotein translation, unmasking a signal peptide at the N-terminus of the precursor of E3/E2. The remaining polyprotein is then targeted to the host endoplasmic reticulum, where host signal peptidase cleaves it into pE2, 6K and E1 proteins. pE2 is further processed to mature E3 and E2 by host furin in trans-Golgi vesicle. Palmitoylated via thioester bonds. These palmitoylations may induce disruption of the C-terminus transmembrane. This would result in the reorientation of E2 C-terminus from lumenal to cytoplasmic side. Post-translationally, N-glycosylated. In terms of processing, palmitoylated via thioester bonds.

It is found in the virion. The protein resides in the host cytoplasm. It localises to the host cell membrane. The protein localises to the virion membrane. Its subcellular location is the host Golgi apparatus. It is found in the host trans-Golgi network. The protein resides in the host endoplasmic reticulum. The enzyme catalyses Autocatalytic release of the core protein from the N-terminus of the togavirus structural polyprotein by hydrolysis of a -Trp-|-Ser- bond.. Functionally, possesses a protease activity that results in its autocatalytic cleavage from the nascent structural protein. Following its self-cleavage, the capsid protein transiently associates with ribosomes, and within several minutes the protein binds to viral RNA and rapidly assembles into icosahedric core particles. The resulting nucleocapsid eventually associates with the cytoplasmic domain of the spike glycoprotein E2 at the cell membrane, leading to budding and formation of mature virions. In case of infection, new virions attach to target cells and after clathrin-mediated endocytosis their membrane fuses with the host endosomal membrane. This leads to the release of the nucleocapsid into the cytoplasm, followed by an uncoating event necessary for the genomic RNA to become accessible. The uncoating might be triggered by the interaction of capsid proteins with ribosomes. Binding of ribosomes would release the genomic RNA since the same region is genomic RNA-binding and ribosome-binding. Provides the signal sequence for the translocation of the precursor of protein E3/E2 to the host endoplasmic reticulum. Mediates pH protection of spike glycoprotein E1 during the transport via the secretory pathway. Its function is as follows. Plays a role in viral attachment to target host cell, by binding to the cell receptor MXRA8. Synthesized as a p62 precursor which is processed by furin at the cell membrane just before virion budding, giving rise to E2-E1 heterodimer. The p62-E1 heterodimer is stable, whereas E2-E1 is unstable and dissociate at low pH. p62 is processed at the last step, presumably to avoid E1 fusion activation before its final export to cell surface. E2 C-terminus contains a transitory transmembrane that would be disrupted by palmitoylation, resulting in reorientation of the C-terminal tail from lumenal to cytoplasmic side. This step is critical since E2 C-terminus is involved in budding by interacting with capsid proteins. This release of E2 C-terminus in cytoplasm occurs lately in protein export, and precludes premature assembly of particles at the endoplasmic reticulum membrane. In terms of biological role, acts as a viroporin that participates in virus glycoprotein processing and transport to the plasma membrane, cell permeabilization and budding of viral particles. Disrupts the calcium homeostasis of the cell, probably at the endoplasmic reticulum level. This leads to cytoplasmic calcium elevation. Because of its lipophilic properties, the 6K protein is postulated to influence the selection of lipids that interact with the transmembrane domains of the glycoproteins, which, in turn, affects the deformability of the bilayer required for the extreme curvature that occurs as budding proceeds. Present in low amount in virions, about 3% compared to viral glycoproteins. Functionally, class II viral fusion protein. Fusion activity is inactive as long as E1 is bound to E2 in mature virion. After virus attachment to target cell via host MXRA8 and endocytosis, acidification of the endosome induce dissociation of E1/E2 heterodimer and concomitant trimerization of the E1 subunits. This E1 trimer is fusion active, and promotes release of viral nucleocapsid in cytoplasm after endosome and viral membrane fusion. Efficient fusion requires the presence of cholesterol and sphingolipid in the target membrane. In O'nyong-nyong virus (strain SG650) (ONNV), this protein is Structural polyprotein.